A 949-amino-acid chain; its full sequence is MFGFQRRGLGTPRLQLWLLLLEFWEVGSGQLHYSVSEEAKHGTFVGRIAQDLGLELAELVQRLFRVASKTHGDLLEVNLQNGILFVNSRIDREELCGQSAECSIHLEVIVDRPLQVFHVNVEVKDINDNPPVFSLREQKLLIAESKQSDSRFPLEGASDADIEENALLTYRLSKNEYFSLDSPTNGKQIKRLSLILKKSLDREKTPELNLLLTATDGGKPELTGTVRLLVQVLDVNDNDPEFDKSEYKVSLMENAAKETLVLKLNATDRDEGVNGEVTYSLMSIKPNGRHLFTLDQNNGEVRVNGTLDYEENKFYKIEVQATDKGTPPMAGHCTVWVEILDTNDNSPEVAVTSLSLPVREDAQPSTVIALISVSDRDSGVNGQVTCSLTPHVPFKLVSTFKNYYSLVLDSALDRENVWAYELVVTARDGGSPSLWATARVSVEVADVNDNAPAFAQPEYTVFVKENNPPGCHIFTVSARDADAQENALVSYSLVERRLGDRALSSYVSVHAESGKVYALQPLDHEELELLQFQVSARDAGVPPLSSNVTLQVFVLDENDNAPALLATQAGSAGGAVNKLVPRSVGAGHVVAKVRAVDADSGYNAWLSYELQPAAGGSRIPFRVGLYTGEISTTRALDEADSPRHRLLVLVKDHGEPALTATATVLVSLVESGQAPKASSRTLAGAASPEAALVDVNVYLIIAICVVSSLLVLTLLLYTALWWSATPTEGACAPGKPTLVCSRAVGSWSYSQQRRQRVCSEEGPPKTDLMAFSPSLPLGLNKEEEGERQEPGSNHPGQPRQPNPDWRYSASLRAGMHSSVHLEEAGILRAGPGGPDQQWPTVSSATPEPEAGEVSPPVGAGVNSNSWTFKYGPGNPKQSGPGELPDKFIIPGSPAIISIRQEPTNSQIDKSDFITFGKKEETKKKKKKKKGNKTQEKKEKGNSTTDNSDQ.

The N-terminal stretch at Met-1–Gly-29 is a signal peptide. Cadherin domains lie at Gln-30–Phe-133, Ala-157–Phe-242, Asp-243–Val-349, Ala-350–Phe-454, Ala-455–Leu-564, and Val-580–Ala-677. The Extracellular segment spans residues Gln-30–Asn-696. Asn-265 and Asn-304 each carry an N-linked (GlcNAc...) asparagine glycan. Asn-547 carries an N-linked (GlcNAc...) asparagine glycan. Residues Val-697–Tyr-717 traverse the membrane as a helical segment. Residues Thr-718–Gln-949 lie on the Cytoplasmic side of the membrane. PXXP repeat units lie at residues Pro-733–Pro-736 and Pro-773–Pro-776. Positions Pro-733–Pro-893 are 6 X 4 AA repeats of P-X-X-P. 2 disordered regions span residues Arg-753–Tyr-807 and Ile-826–Gln-949. Residues Asn-780 to Glu-789 show a composition bias toward basic and acidic residues. PXXP repeat units follow at residues Pro-795–Pro-798, Pro-831–Pro-834, Pro-872–Pro-875, and Pro-890–Pro-893. A compositionally biased stretch (basic and acidic residues) spans Asp-908–Lys-922.

It is found in the cell membrane. Potential calcium-dependent cell-adhesion protein. May be involved in the establishment and maintenance of specific neuronal connections in the brain. This Homo sapiens (Human) protein is Protocadherin alpha-11 (PCDHA11).